Here is a 378-residue protein sequence, read N- to C-terminus: Chaperone protein DnaJ (378 aa).

Positions Asp5–Gly70 constitute a J domain. The CR-type zinc-finger motif lies at Gly138 to Thr216. Cys151, Cys154, Cys168, Cys171, Cys190, Cys193, Cys204, and Cys207 together coordinate Zn(2+). CXXCXGXG motif repeat units follow at residues Cys151–Gly158, Cys168–Gly175, Cys190–Gly197, and Cys204–Gly211.

The protein belongs to the DnaJ family. Homodimer. Zn(2+) serves as cofactor.

It is found in the cytoplasm. Functionally, participates actively in the response to hyperosmotic and heat shock by preventing the aggregation of stress-denatured proteins and by disaggregating proteins, also in an autonomous, DnaK-independent fashion. Unfolded proteins bind initially to DnaJ; upon interaction with the DnaJ-bound protein, DnaK hydrolyzes its bound ATP, resulting in the formation of a stable complex. GrpE releases ADP from DnaK; ATP binding to DnaK triggers the release of the substrate protein, thus completing the reaction cycle. Several rounds of ATP-dependent interactions between DnaJ, DnaK and GrpE are required for fully efficient folding. Also involved, together with DnaK and GrpE, in the DNA replication of plasmids through activation of initiation proteins. The chain is Chaperone protein DnaJ from Burkholderia lata (strain ATCC 17760 / DSM 23089 / LMG 22485 / NCIMB 9086 / R18194 / 383).